Reading from the N-terminus, the 541-residue chain is 2-succinyl-5-enolpyruvyl-6-hydroxy-3-cyclohexene-1-carboxylate synthase (541 aa).

This sequence belongs to the TPP enzyme family. MenD subfamily. As to quaternary structure, homodimer. The cofactor is Mg(2+). Requires Mn(2+) as cofactor. Thiamine diphosphate serves as cofactor.

It catalyses the reaction isochorismate + 2-oxoglutarate + H(+) = 5-enolpyruvoyl-6-hydroxy-2-succinyl-cyclohex-3-ene-1-carboxylate + CO2. Its pathway is quinol/quinone metabolism; 1,4-dihydroxy-2-naphthoate biosynthesis; 1,4-dihydroxy-2-naphthoate from chorismate: step 2/7. It participates in quinol/quinone metabolism; menaquinone biosynthesis. Functionally, catalyzes the thiamine diphosphate-dependent decarboxylation of 2-oxoglutarate and the subsequent addition of the resulting succinic semialdehyde-thiamine pyrophosphate anion to isochorismate to yield 2-succinyl-5-enolpyruvyl-6-hydroxy-3-cyclohexene-1-carboxylate (SEPHCHC). The protein is 2-succinyl-5-enolpyruvyl-6-hydroxy-3-cyclohexene-1-carboxylate synthase of Leuconostoc mesenteroides subsp. mesenteroides (strain ATCC 8293 / DSM 20343 / BCRC 11652 / CCM 1803 / JCM 6124 / NCDO 523 / NBRC 100496 / NCIMB 8023 / NCTC 12954 / NRRL B-1118 / 37Y).